Here is a 307-residue protein sequence, read N- to C-terminus: Ribosomal RNA small subunit methyltransferase H (307 aa).

Residues 32–34 (GGH), aspartate 52, phenylalanine 78, aspartate 99, and glutamine 106 contribute to the S-adenosyl-L-methionine site.

Belongs to the methyltransferase superfamily. RsmH family.

The protein resides in the cytoplasm. It catalyses the reaction cytidine(1402) in 16S rRNA + S-adenosyl-L-methionine = N(4)-methylcytidine(1402) in 16S rRNA + S-adenosyl-L-homocysteine + H(+). Functionally, specifically methylates the N4 position of cytidine in position 1402 (C1402) of 16S rRNA. The chain is Ribosomal RNA small subunit methyltransferase H from Caldicellulosiruptor saccharolyticus (strain ATCC 43494 / DSM 8903 / Tp8T 6331).